The sequence spans 137 residues: Nucleoside diphosphate kinase (137 aa).

K9, F57, R85, T91, R102, and N112 together coordinate ATP. The Pros-phosphohistidine intermediate role is filled by H115.

The protein belongs to the NDK family. Homotetramer. Mg(2+) is required as a cofactor.

The protein resides in the cytoplasm. The enzyme catalyses a 2'-deoxyribonucleoside 5'-diphosphate + ATP = a 2'-deoxyribonucleoside 5'-triphosphate + ADP. It carries out the reaction a ribonucleoside 5'-diphosphate + ATP = a ribonucleoside 5'-triphosphate + ADP. Its function is as follows. Major role in the synthesis of nucleoside triphosphates other than ATP. The ATP gamma phosphate is transferred to the NDP beta phosphate via a ping-pong mechanism, using a phosphorylated active-site intermediate. The protein is Nucleoside diphosphate kinase of Helicobacter hepaticus (strain ATCC 51449 / 3B1).